A 370-amino-acid chain; its full sequence is S-adenosylmethionine:tRNA ribosyltransferase-isomerase (370 aa).

Belongs to the QueA family. Monomer.

It is found in the cytoplasm. The catalysed reaction is 7-aminomethyl-7-carbaguanosine(34) in tRNA + S-adenosyl-L-methionine = epoxyqueuosine(34) in tRNA + adenine + L-methionine + 2 H(+). Its pathway is tRNA modification; tRNA-queuosine biosynthesis. In terms of biological role, transfers and isomerizes the ribose moiety from AdoMet to the 7-aminomethyl group of 7-deazaguanine (preQ1-tRNA) to give epoxyqueuosine (oQ-tRNA). The sequence is that of S-adenosylmethionine:tRNA ribosyltransferase-isomerase from Synechococcus sp. (strain WH7803).